The following is a 681-amino-acid chain: Type VI secretion system spike protein VgrG1 (681 aa).

The segment at 621-640 (NSGGSPSSGSGWGGKSPVDP) is disordered.

It belongs to the VgrG protein family.

The protein localises to the secreted. The enzyme catalyses L-arginyl-[protein] + NAD(+) = N(omega)-(ADP-D-ribosyl)-L-arginyl-[protein] + nicotinamide + H(+). Its function is as follows. Part of the type VI secretion system specialized secretion system, which delivers several virulence factors in both prokaryotic and eukaryotic cells during infection. Acts directly as an secreted effector with an actin ADP-ribosyltransferase activity that disrupts the host actin cytoskeleton, leading to a decrease in host cell viability and an increase in apoptosis. The chain is Type VI secretion system spike protein VgrG1 (vgrG1) from Aeromonas hydrophila.